The following is a 583-amino-acid chain: Proline--tRNA ligase (583 aa).

It belongs to the class-II aminoacyl-tRNA synthetase family. ProS type 1 subfamily. Homodimer.

It localises to the cytoplasm. The catalysed reaction is tRNA(Pro) + L-proline + ATP = L-prolyl-tRNA(Pro) + AMP + diphosphate. Functionally, catalyzes the attachment of proline to tRNA(Pro) in a two-step reaction: proline is first activated by ATP to form Pro-AMP and then transferred to the acceptor end of tRNA(Pro). As ProRS can inadvertently accommodate and process non-cognate amino acids such as alanine and cysteine, to avoid such errors it has two additional distinct editing activities against alanine. One activity is designated as 'pretransfer' editing and involves the tRNA(Pro)-independent hydrolysis of activated Ala-AMP. The other activity is designated 'posttransfer' editing and involves deacylation of mischarged Ala-tRNA(Pro). The misacylated Cys-tRNA(Pro) is not edited by ProRS. The chain is Proline--tRNA ligase from Methylococcus capsulatus (strain ATCC 33009 / NCIMB 11132 / Bath).